The sequence spans 160 residues: Nucleotide-binding protein VFMJ11_1323 (160 aa).

This sequence belongs to the YajQ family.

Its function is as follows. Nucleotide-binding protein. This is Nucleotide-binding protein VFMJ11_1323 from Aliivibrio fischeri (strain MJ11) (Vibrio fischeri).